The chain runs to 234 residues: ASEGNGRGPYVQADLAYAYEHITHDYPEQTGTKKDKISTVSDYFRNIRTHSIHPRVSVGYDFGGWRIAADYARYRKWNDNKYSVDIKELENKNQNKRDLKTENQENGTFHAVSSLGLSAVYDFKLNGKFKPYIGARVAYGHVRHSIDSTKKTTKFLTSSYGGLNPTVYTEENTQNAHHQSNSIRRVGLGVIAGVGFDITPKLTLDTGYRYHYWGRLENTRFKTHEASLGVRYRF.

Residue Ala-1 is a signal peptide.

The protein belongs to the opacity porin family.

It is found in the cell outer membrane. Its function is as follows. Implicated in a number of adherence functions. OPA proteins are implicated in pathogenesis and are subject to phase variation. This is Opacity protein opA51 (opaB) from Neisseria gonorrhoeae.